Consider the following 261-residue polypeptide: Glutamate racemase (261 aa).

Residues 12 to 13 and 44 to 45 each bind substrate; these read DS and YG. Catalysis depends on cysteine 76, which acts as the Proton donor/acceptor. 77 to 78 provides a ligand contact to substrate; that stretch reads NT. The active-site Proton donor/acceptor is the cysteine 180. Residue 181 to 182 coordinates substrate; that stretch reads TH.

This sequence belongs to the aspartate/glutamate racemases family.

The catalysed reaction is L-glutamate = D-glutamate. It functions in the pathway cell wall biogenesis; peptidoglycan biosynthesis. Provides the (R)-glutamate required for cell wall biosynthesis. The protein is Glutamate racemase of Borreliella burgdorferi (strain ATCC 35210 / DSM 4680 / CIP 102532 / B31) (Borrelia burgdorferi).